A 135-amino-acid polypeptide reads, in one-letter code: ATP synthase epsilon chain (135 aa).

Belongs to the ATPase epsilon chain family. As to quaternary structure, F-type ATPases have 2 components, CF(1) - the catalytic core - and CF(0) - the membrane proton channel. CF(1) has five subunits: alpha(3), beta(3), gamma(1), delta(1), epsilon(1). CF(0) has three main subunits: a, b and c.

It localises to the cell inner membrane. Produces ATP from ADP in the presence of a proton gradient across the membrane. This is ATP synthase epsilon chain from Bradyrhizobium sp. (strain BTAi1 / ATCC BAA-1182).